The following is a 394-amino-acid chain: uncharacterized protein (394 aa).

Belongs to the mycobacterial PPE family.

This is an uncharacterized protein from Mycobacterium tuberculosis (strain CDC 1551 / Oshkosh).